Reading from the N-terminus, the 568-residue chain is Arginine--tRNA ligase (568 aa).

Residues 129 to 139 carry the 'HIGH' region motif; the sequence is ANPTGPLHIGH.

This sequence belongs to the class-I aminoacyl-tRNA synthetase family. Monomer.

Its subcellular location is the cytoplasm. It carries out the reaction tRNA(Arg) + L-arginine + ATP = L-arginyl-tRNA(Arg) + AMP + diphosphate. This Wolbachia pipientis wMel protein is Arginine--tRNA ligase.